Consider the following 350-residue polypeptide: MPVLHNRISNDALKAKMLAESEPRTTISFYKYFHIADPKATRDALYQLFTALNVFGRVYLAHEGINAQISVPASNVKTFRAQLYAFDSALDGLRLNIALDDDGKSFWVLRMKVRDRIVADGIDDPHFDASNVGEYLQAAEVNAMLDDPDALFIDMRNHYEYEVGHFENALEIPADTFREQLPKAVEMMQAHKDKKIVMYCTGGIRCEKASAWMKHNGFNKVWHIEGGIIEYARKAREQGLPVRFIGKNFVFDERMGERISDEIIAHCHQCGAPCDSHTNCKNDGCHLLFIQCPVCAEKYKGCCSEICCEESALPPEEQRRRRAGRENGNKIFNKSRGRLNTTLGIPDPTE.

Positions aspartate 146–leucine 240 constitute a Rhodanese domain. Catalysis depends on cysteine 200, which acts as the Cysteine persulfide intermediate.

It belongs to the TrhO family.

The enzyme catalyses uridine(34) in tRNA + AH2 + O2 = 5-hydroxyuridine(34) in tRNA + A + H2O. Functionally, catalyzes oxygen-dependent 5-hydroxyuridine (ho5U) modification at position 34 in tRNAs, the first step in 5-carboxymethoxyuridine (cmo5U) biosynthesis. May be part of an alternate pathway, which is able to bypass cmo5U biogenesis in a subset of tRNAs under aerobic conditions. The chain is tRNA uridine(34) hydroxylase from Escherichia coli O157:H7.